The sequence spans 137 residues: Large ribosomal subunit protein eL28 (137 aa).

Ser-2 is modified (N-acetylserine). Residues Lys-58 and Lys-65 each participate in a glycyl lysine isopeptide (Lys-Gly) (interchain with G-Cter in SUMO2) cross-link. Ser-115 is modified (phosphoserine).

This sequence belongs to the eukaryotic ribosomal protein eL28 family. In terms of assembly, component of the large ribosomal subunit.

It is found in the cytoplasm. In terms of biological role, component of the large ribosomal subunit. The ribosome is a large ribonucleoprotein complex responsible for the synthesis of proteins in the cell. The sequence is that of Large ribosomal subunit protein eL28 (Rpl28) from Rattus norvegicus (Rat).